The chain runs to 191 residues: Ubiquinol-cytochrome c reductase iron-sulfur subunit (191 aa).

The helical transmembrane segment at 18–35 threads the bilayer; that stretch reads ATAATGVVVTGAAVWPLI. A Rieske domain is found at 94–189; sequence RDTSAENANK…AAFVDETTIK (96 aa). The tract at residues 95–116 is disordered; the sequence is DTSAENANKPGAEATDENRTLP. [2Fe-2S] cluster is bound by residues cysteine 133, histidine 135, cysteine 153, and histidine 156. Cysteine 138 and cysteine 155 are joined by a disulfide.

This sequence belongs to the Rieske iron-sulfur protein family. In terms of assembly, the main subunits of complex b-c1 are: cytochrome b, cytochrome c1 and the Rieske protein. Requires [2Fe-2S] cluster as cofactor.

The protein resides in the cell membrane. The catalysed reaction is a quinol + 2 Fe(III)-[cytochrome c](out) = a quinone + 2 Fe(II)-[cytochrome c](out) + 2 H(+)(out). In terms of biological role, component of the ubiquinol-cytochrome c reductase complex (complex III or cytochrome b-c1 complex), which is a respiratory chain that generates an electrochemical potential coupled to ATP synthesis. This is Ubiquinol-cytochrome c reductase iron-sulfur subunit (petA) from Rhodobacter capsulatus (strain ATCC BAA-309 / NBRC 16581 / SB1003).